Reading from the N-terminus, the 263-residue chain is Palmitoyltransferase ZDHHC21 (263 aa).

The Cytoplasmic segment spans residues 1 to 4 (MKMR). A helical membrane pass occupies residues 5-25 (LHFVVDPMGWFCMSMVFFVWI). Topologically, residues 26–44 (YNSFLIPKLVLLPHYAEGH) are extracellular. A helical transmembrane segment spans residues 45-65 (ITAEPVICYYLASLLCFSALF). Residues 66-131 (RASTTDPGKL…WINNCVGEDN (66 aa)) lie on the Cytoplasmic side of the membrane. The DHHC domain maps to 90–140 (ELCNKCNMMRPKRSHHCSRCGHCVRRMDHHCPWINNCVGEDNHWLFLQLCF). Cys-120 (S-palmitoyl cysteine intermediate) is an active-site residue. A helical transmembrane segment spans residues 132-152 (HWLFLQLCFYTQVLSFYTLVL). Topologically, residues 153-181 (DFCQYYYFLPLSSVDQADFAVHHELALLR) are extracellular. The helical transmembrane segment at 182–202 (VSCFMGLIMFGGISSLFYTQV) threads the bilayer. Topologically, residues 203-263 (KGILTDTTTI…KLNLTIRSHV (61 aa)) are cytoplasmic.

It belongs to the DHHC palmitoyltransferase family.

It localises to the golgi apparatus membrane. It is found in the golgi apparatus. The protein resides in the cis-Golgi network membrane. Its subcellular location is the cell membrane. The catalysed reaction is L-cysteinyl-[protein] + hexadecanoyl-CoA = S-hexadecanoyl-L-cysteinyl-[protein] + CoA. Its function is as follows. Palmitoyltransferase that catalyzes the addition of palmitate onto various protein substrates. In Danio rerio (Zebrafish), this protein is Palmitoyltransferase ZDHHC21.